The primary structure comprises 88 residues: MTTANTTAKDNAATKKRGRKAKKRVCAFCTDNIDKIDYKDVARLRKYITERGKILPRRITGNCARHQRQLTKAIKRARQIALLPYTVE.

Positions 1–11 (MTTANTTAKDN) are enriched in low complexity. A disordered region spans residues 1–21 (MTTANTTAKDNAATKKRGRKA).

It belongs to the bacterial ribosomal protein bS18 family. In terms of assembly, part of the 30S ribosomal subunit. Forms a tight heterodimer with protein bS6.

Functionally, binds as a heterodimer with protein bS6 to the central domain of the 16S rRNA, where it helps stabilize the platform of the 30S subunit. The chain is Small ribosomal subunit protein bS18 from Thermoanaerobacter pseudethanolicus (strain ATCC 33223 / 39E) (Clostridium thermohydrosulfuricum).